We begin with the raw amino-acid sequence, 631 residues long: Mu-like prophage FluMu protein gp42 (631 aa).

Helical transmembrane passes span 56 to 76 and 385 to 405; these read LGNI…TMVG and GLAD…PVYV. Positions 425-453 are disordered; sequence IEDGRDKDKKTQKKNKPPRPKRGRGSVRS. Basic residues predominate over residues 434–449; the sequence is KTQKKNKPPRPKRGRG. 3 consecutive transmembrane segments (helical) span residues 455–475, 495–515, and 543–563; these read VAAV…VTTA, SKAV…TVLM, and ALIP…GWLG.

The protein to phage Mu protein gp42.

It localises to the cell membrane. The chain is Mu-like prophage FluMu protein gp42 from Haemophilus influenzae (strain ATCC 51907 / DSM 11121 / KW20 / Rd).